The sequence spans 428 residues: D-amino acid dehydrogenase (428 aa).

Residue 3-17 participates in FAD binding; the sequence is VVILGSGVVGVASAY.

The protein belongs to the DadA oxidoreductase family. FAD is required as a cofactor.

The catalysed reaction is a D-alpha-amino acid + A + H2O = a 2-oxocarboxylate + AH2 + NH4(+). The protein operates within amino-acid degradation; D-alanine degradation; NH(3) and pyruvate from D-alanine: step 1/1. Oxidative deamination of D-amino acids. The polypeptide is D-amino acid dehydrogenase (Burkholderia pseudomallei (strain 1106a)).